The chain runs to 121 residues: Large ribosomal subunit protein bL19 (121 aa).

The protein belongs to the bacterial ribosomal protein bL19 family.

Its function is as follows. This protein is located at the 30S-50S ribosomal subunit interface and may play a role in the structure and function of the aminoacyl-tRNA binding site. This chain is Large ribosomal subunit protein bL19, found in Chlorobium phaeovibrioides (strain DSM 265 / 1930) (Prosthecochloris vibrioformis (strain DSM 265)).